The following is a 137-amino-acid chain: Large ribosomal subunit protein uL16 (137 aa).

Belongs to the universal ribosomal protein uL16 family. As to quaternary structure, part of the 50S ribosomal subunit.

In terms of biological role, binds 23S rRNA and is also seen to make contacts with the A and possibly P site tRNAs. The chain is Large ribosomal subunit protein uL16 from Lawsonia intracellularis (strain PHE/MN1-00).